A 338-amino-acid chain; its full sequence is Oligopeptide transport ATP-binding protein OppD (338 aa).

An ABC transporter domain is found at 7 to 257 (LEAKQVSVAF…PKHPYTRSLL (251 aa)). 43–50 (GESGSGKS) is an ATP binding site.

This sequence belongs to the ABC transporter superfamily. As to quaternary structure, the complex is composed of two ATP-binding proteins (OppD and OppF), two transmembrane proteins (OppB and OppC) and a solute-binding protein (OppA).

The protein resides in the cell membrane. The enzyme catalyses a [peptide](out) + ATP + H2O = a [peptide](in) + ADP + phosphate + H(+). Its function is as follows. Part of the ABC transporter complex OppABCDF involved in the uptake of oligopeptides. Probably responsible for energy coupling to the transport system. Essential for uptake of peptides larger than three amino acids and for growth in milk. The sequence is that of Oligopeptide transport ATP-binding protein OppD from Lactococcus lactis subsp. cremoris (strain SK11).